Reading from the N-terminus, the 65-residue chain is Putative antitoxin PF2058 (65 aa).

Belongs to the UPF0165 family.

Functionally, possibly the antitoxin component of a type II toxin-antitoxin (TA) system. This chain is Putative antitoxin PF2058, found in Pyrococcus furiosus (strain ATCC 43587 / DSM 3638 / JCM 8422 / Vc1).